Reading from the N-terminus, the 614-residue chain is Serine/threonine-protein kinase Pkn1 (614 aa).

The Protein kinase domain occupies 13 to 276; the sequence is YKVIAELGHG…TSGEQLQVTL (264 aa). ATP-binding positions include 19 to 27 and Lys-42; that span reads LGHGLWSRD.

This sequence belongs to the protein kinase superfamily. Ser/Thr protein kinase family. Interacts with PknD, interacts with and phosphorylates IncG. In terms of processing, autophosphorylates on serine and threonine residues. Present in elementary bodies 40 hours post-infection as 2 proteins of approximately 70 and 65 kDa; the smaller one may be due to differential phosphorylation or degradation.

It catalyses the reaction L-seryl-[protein] + ATP = O-phospho-L-seryl-[protein] + ADP + H(+). The enzyme catalyses L-threonyl-[protein] + ATP = O-phospho-L-threonyl-[protein] + ADP + H(+). Functionally, together with the serine/threonine kinase PknD, may play a role in specific interactions with host proteins during host intracellular growth. Autophosphorylates and phosphorylates IncG, an inclusion-membrane protein required for the modification of the nascent chlamydial inclusion. The sequence is that of Serine/threonine-protein kinase Pkn1 (pkn1) from Chlamydia trachomatis serovar L2 (strain ATCC VR-902B / DSM 19102 / 434/Bu).